Consider the following 52-residue polypeptide: ATP synthase protein 8 (52 aa).

A helical membrane pass occupies residues 10 to 30 (FLMSLMIMMILIFMTINFYFF).

This sequence belongs to the ATPase protein 8 family. F-type ATPases have 2 components, CF(1) - the catalytic core - and CF(0) - the membrane proton channel.

The protein resides in the mitochondrion membrane. Mitochondrial membrane ATP synthase (F(1)F(0) ATP synthase or Complex V) produces ATP from ADP in the presence of a proton gradient across the membrane which is generated by electron transport complexes of the respiratory chain. F-type ATPases consist of two structural domains, F(1) - containing the extramembraneous catalytic core and F(0) - containing the membrane proton channel, linked together by a central stalk and a peripheral stalk. During catalysis, ATP synthesis in the catalytic domain of F(1) is coupled via a rotary mechanism of the central stalk subunits to proton translocation. Part of the complex F(0) domain. Minor subunit located with subunit a in the membrane. This Rhipicephalus sanguineus (Brown dog tick) protein is ATP synthase protein 8 (MT-ATP8).